A 54-amino-acid chain; its full sequence is MHKNTHTKPDVNFYDKSGKTPLDWYSDYNATKIVETLIKNGGNVSSVYSRCSYS.

One copy of the ANK repeat lies at 17-46 (SGKTPLDWYSDYNATKIVETLIKNGGNVSS).

The polypeptide is Putative ankyrin repeat protein RC0701 (Rickettsia conorii (strain ATCC VR-613 / Malish 7)).